A 1111-amino-acid polypeptide reads, in one-letter code: Atrial natriuretic peptide-converting enzyme (1111 aa).

Residues 1-112 (MGRVSFNVRV…QKLVTANLLR (112 aa)) lie on the Cytoplasmic side of the membrane. The DDNN motif signature appears at 93–96 (ADSS). A helical; Signal-anchor for type II membrane protein transmembrane segment spans residues 113–133 (FLLLVLIPCICALIVLLAILL). Topologically, residues 134-1111 (SFVGTLKKVY…QTFLQKKSQG (978 aa)) are extracellular. N-linked (GlcNAc...) asparagine glycosylation is present at Asn-147. An FZ 1 domain is found at 199–325 (GNTSTCVNIT…SDASRICFSL (127 aa)). Intrachain disulfides connect Cys-204-Cys-264, Cys-212-Cys-257, Cys-248-Cys-288, Cys-277-Cys-322, Cys-281-Cys-305, Cys-335-Cys-348, Cys-343-Cys-361, Cys-355-Cys-370, Cys-372-Cys-384, Cys-379-Cys-397, Cys-391-Cys-406, Cys-408-Cys-421, Cys-416-Cys-434, Cys-428-Cys-443, Cys-445-Cys-458, Cys-453-Cys-471, Cys-465-Cys-480, Cys-521-Cys-584, Cys-529-Cys-577, Cys-568-Cys-606, Cys-595-Cys-636, Cys-599-Cys-623, Cys-646-Cys-658, Cys-653-Cys-671, Cys-665-Cys-680, Cys-682-Cys-696, Cys-690-Cys-709, Cys-703-Cys-718, Cys-721-Cys-733, Cys-728-Cys-746, and Cys-740-Cys-755. Asn-296 carries N-linked (GlcNAc...) asparagine glycosylation. LDL-receptor class A domains follow at residues 334–371 (LCGG…AHCN), 371–407 (NCSE…QNCD), 407–444 (DCNL…VNCS), and 444–481 (SCPS…ENCS). An N-linked (GlcNAc...) asparagine glycan is attached at Asn-409. The FZ 2 domain maps to 516–639 (SNCSHCEPIT…SSDNQTCLLP (124 aa)). N-linked (GlcNAc...) asparagine glycosylation occurs at Asn-535. LDL-receptor class A domains are found at residues 645-681 (ECSP…ENCG), 681-719 (GCKE…KNCS), and 720-756 (FCQD…WGCV). The SRCR domain maps to 756–851 (VTLSKNGNSS…SGSEISLLCT (96 aa)). A glycan (N-linked (GlcNAc...) asparagine) is linked at Asn-763. 4 disulfides stabilise this stretch: Cys-855–Cys-977, Cys-893–Cys-909, Cys-991–Cys-1056, and Cys-1020–Cys-1035. The Peptidase S1 domain occupies 867–1100 (ILGGRTSRPG…FVDWIERQIY (234 aa)). Catalysis depends on charge relay system residues His-908 and Asp-957. The active-site Charge relay system is the Ser-1050.

This sequence belongs to the peptidase S1 family. Post-translationally, N-glycosylated; required for processing and activation. In terms of processing, activated through proteolytic processing by a trypsin-like protease; cleaved into a N-terminal propeptide and an activated corin protease fragment. Atrial natriuretic peptide-converting enzyme, 180 kDa soluble fragment is produced by cleavage by ADAM10. Cleavage by ADAM10 to produce soluble 180 kDa soluble fragment takes place after the transmembrane region and before FZ 1. A disulfide bond links the activated corin protease fragment and the N-terminal propeptide. The disulfide bond also links the activated corin protease fragment with Atrial natriuretic peptide-converting enzyme, 180 kDa soluble fragment. In terms of tissue distribution, specifically expressed in heart. Also detected in kidney, aorta, brain and testis. In kidney, present in epithelial cells, with segmental expression in the proximal tubule, thick ascending limb, connecting tubule, and throughout the collecting duct (at protein level).

It localises to the cell membrane. It is found in the cytoplasmic vesicle. Its subcellular location is the secreted. In terms of biological role, serine-type endopeptidase involved in atrial natriuretic peptide (NPPA) processing. Converts through proteolytic cleavage the non-functional propeptide NPPA into the active hormone, thereby regulating blood pressure in heart and promoting natriuresis, diuresis and vasodilation. Proteolytic cleavage of pro-NPPA also plays a role in female pregnancy by promoting trophoblast invasion and spiral artery remodeling in uterus. Also acts as a regulator of sodium reabsorption in kidney. May also process pro-NPPB the B-type natriuretic peptide. The protein is Atrial natriuretic peptide-converting enzyme (Corin) of Rattus norvegicus (Rat).